The sequence spans 213 residues: Thiopurine S-methyltransferase (213 aa).

The S-adenosyl-L-methionine site is built by Trp10, Leu45, Glu66, and Arg121.

Belongs to the class I-like SAM-binding methyltransferase superfamily. TPMT family.

The protein resides in the cytoplasm. It catalyses the reaction S-adenosyl-L-methionine + a thiopurine = S-adenosyl-L-homocysteine + a thiopurine S-methylether.. The sequence is that of Thiopurine S-methyltransferase from Aliivibrio fischeri (strain MJ11) (Vibrio fischeri).